The following is a 545-amino-acid chain: uncharacterized protein (545 aa).

Disordered stretches follow at residues 1 to 162 (MSSG…DPQE) and 200 to 250 (YPPV…EPPP). Residues 86-100 (NYRSHSSADYLTPNS) show a composition bias toward polar residues. Low complexity-rich tracts occupy residues 109-128 (TTPR…TATK) and 141-152 (SGASTSSGTSST). Composition is skewed to polar residues over residues 212–221 (SSRTGTLQRT) and 228–244 (ISST…QMQS). The PDZ domain occupies 458–540 (RVLVEKMMPG…VTITLLPAVG (83 aa)).

This is an uncharacterized protein from Caenorhabditis elegans.